The following is a 127-amino-acid chain: Fluoride-specific ion channel FluC (127 aa).

The next 4 helical transmembrane spans lie at 4 to 24, 36 to 56, 72 to 92, and 101 to 121; these read LLLV…VGVG, GTFT…SWLA, VGVL…ALMI, and FTYS…GLLV. Na(+) is bound by residues glycine 76 and threonine 79.

Belongs to the fluoride channel Fluc/FEX (TC 1.A.43) family.

It localises to the cell inner membrane. The catalysed reaction is fluoride(in) = fluoride(out). With respect to regulation, na(+) is not transported, but it plays an essential structural role and its presence is essential for fluoride channel function. Functionally, fluoride-specific ion channel. Important for reducing fluoride concentration in the cell, thus reducing its toxicity. In Caulobacter vibrioides (strain ATCC 19089 / CIP 103742 / CB 15) (Caulobacter crescentus), this protein is Fluoride-specific ion channel FluC.